Here is a 525-residue protein sequence, read N- to C-terminus: Bifunctional enzyme NanE/NanK (525 aa).

The manNAc-6-P epimerase stretch occupies residues 1 to 241 (MRGSPRNLCR…DAVESAAKPS (241 aa)). A manNAc kinase region spans residues 242 to 525 (SPVLAFDIGG…VADLAATYFS (284 aa)). ATP-binding positions include 246 to 253 (AFDIGGTK) and 372 to 379 (GIGGGIVL).

It in the N-terminal section; belongs to the NanE family. The protein in the C-terminal section; belongs to the ROK (NagC/XylR) family. NanK subfamily.

It carries out the reaction an N-acyl-D-glucosamine 6-phosphate = an N-acyl-D-mannosamine 6-phosphate. It catalyses the reaction an N-acyl-D-mannosamine + ATP = an N-acyl-D-mannosamine 6-phosphate + ADP + H(+). The protein operates within amino-sugar metabolism; N-acetylneuraminate degradation; D-fructose 6-phosphate from N-acetylneuraminate: step 2/5. It participates in amino-sugar metabolism; N-acetylneuraminate degradation; D-fructose 6-phosphate from N-acetylneuraminate: step 3/5. Functionally, converts N-acetylmannosamine-6-phosphate (ManNAc-6-P) to N-acetylglucosamine-6-phosphate (GlcNAc-6-P). In terms of biological role, catalyzes the phosphorylation of N-acetylmannosamine (ManNAc) to ManNAc-6-P. The protein is Bifunctional enzyme NanE/NanK (nanEK) of Brucella suis biovar 1 (strain 1330).